The sequence spans 185 residues: Regulatory protein RecX (185 aa).

The protein belongs to the RecX family.

It is found in the cytoplasm. Its function is as follows. Modulates RecA activity. The polypeptide is Regulatory protein RecX (Thermobifida fusca (strain YX)).